Reading from the N-terminus, the 188-residue chain is Diphosphoinositol polyphosphate phosphohydrolase DDP1 (188 aa).

Residues 1–21 (MGKTADNHGPVRSETAREGRE) are compositionally biased toward basic and acidic residues. The disordered stretch occupies residues 1–23 (MGKTADNHGPVRSETAREGRENQ). In terms of domain architecture, Nudix hydrolase spans 30-179 (GARLVAGCIC…KRPELLEALN (150 aa)). 1D-myo-inositol hexakisphosphate contacts are provided by Arg32, Ser52, Ser53, and Lys63. Residues Arg32, Ser52, Ser53, and Lys63 each contribute to the 5-diphospho-1D-myo-inositol 1,2,3,4,6-pentakisphosphate site. 4 residues coordinate P(1),P(5)-bis(5'-adenosyl) pentaphosphate: Arg32, Ser52, Ser53, and Lys63. Mg(2+) contacts are provided by Lys63, Glu80, and Glu84. The short motif at 65-86 (GVEKDEPNYETTAQRETWEEAG) is the Nudix box element. Residue Asp100 coordinates P(1),P(5)-bis(5'-adenosyl) pentaphosphate. Residues Arg102, Arg129, Arg152, and Arg171 each contribute to the 1D-myo-inositol hexakisphosphate site. Position 102 (Arg102) interacts with 5-diphospho-1D-myo-inositol 1,2,3,4,6-pentakisphosphate. Residues Arg152 and Arg171 each contribute to the 5-diphospho-1D-myo-inositol 1,2,3,4,6-pentakisphosphate site. 3 residues coordinate P(1),P(5)-bis(5'-adenosyl) pentaphosphate: Arg152, Arg171, and Glu173.

It belongs to the Nudix hydrolase family. DIPP subfamily. Mg(2+) serves as cofactor. The cofactor is Mn(2+). Requires Zn(2+) as cofactor.

It localises to the cytoplasm. Its subcellular location is the nucleus. It catalyses the reaction diphospho-myo-inositol polyphosphate + H2O = myo-inositol polyphosphate + phosphate.. The catalysed reaction is P(1),P(6)-bis(5'-adenosyl) hexaphosphate + H2O = adenosine 5'-pentaphosphate + AMP + 2 H(+). The enzyme catalyses P(1),P(5)-bis(5'-adenosyl) pentaphosphate + H2O = adenosine 5'-tetraphosphate + AMP + 2 H(+). It carries out the reaction [phosphate](n+1) + n H2O = (n+1) phosphate + n H(+). In terms of biological role, may eliminate potentially toxic dinucleoside polyphosphates during sporulation. Most active against diadenosine 5',5'''-P1,P6-hexaphosphate (Ap6A). Can also hydrolyze diadenosine 5',5'''-P1,P5-pentaphosphate (Ap5A), adenosine 5'-pentaphosphate (p5A), and adenosine 5'-tetraphosphate (p4A) are also substrates, but not diadenosine 5',5'''-P1,P4-tetraphosphate (Ap4A) or other dinucleotides, mononucleotides, nucleotide sugars, or nucleotide alcohols. Also cleaves a beta-phosphate from the diphosphate groups in PP-InsP5 (diphosphoinositol pentakisphosphate) and [PP]2-InsP4 (bisdiphosphoinositol tetrakisphosphate). Also has endopolyphosphatase activity. This is Diphosphoinositol polyphosphate phosphohydrolase DDP1 (DDP1) from Saccharomyces cerevisiae (strain ATCC 204508 / S288c) (Baker's yeast).